A 74-amino-acid chain; its full sequence is Ubiquitin-like protein FUBI (74 aa).

The protein belongs to the ubiquitin family.

The chain is Ubiquitin-like protein FUBI (FAU) from Bos taurus (Bovine).